Consider the following 138-residue polypeptide: Proofreading thioesterase EntH (138 aa).

Glutamate 64 serves as the catalytic Nucleophile or proton acceptor.

Belongs to the thioesterase PaaI family. As to quaternary structure, homotetramer. Dimer of dimers. Interacts specifically with the aryl carrier protein (ArCP) domain of EntB.

It localises to the cytoplasm. The protein operates within siderophore biosynthesis; enterobactin biosynthesis. Required for optimal enterobactin synthesis. Acts as a proofreading enzyme that prevents EntB misacylation by hydrolyzing the thioester bound existing between EntB and wrongly charged molecules. The chain is Proofreading thioesterase EntH from Salmonella arizonae (strain ATCC BAA-731 / CDC346-86 / RSK2980).